The following is a 406-amino-acid chain: E3 ubiquitin-protein ligase RING1 (406 aa).

Threonine 24 carries the post-translational modification Phosphothreonine. The segment at 30–234 is necessary for transcriptional repression; the sequence is MDGTEIAVSP…GGAGSEDSGD (205 aa). Position 38 is a phosphoserine (serine 38). The RING-type zinc finger occupies 48–88; that stretch reads CPICLDMLKNTMTTKECLHRFCSDCIVTALRSGNKECPTCR. Phosphoserine occurs at positions 140, 187, and 190. Disordered stretches follow at residues 151 to 263 and 309 to 354; these read HRAQ…GEIE and QQQE…PSLE. A compositionally biased stretch (acidic residues) spans 175–187; the sequence is EPGEGEGDGEDIS. A Nuclear localization signal motif is present at residues 201–204; it reads KRPR. Residues 205-228 show a composition bias toward gly residues; the sequence is GGGAGGSSVGTGGGAAGGACGGAG. Threonine 215 is subject to Phosphothreonine. A phosphoserine mark is found at serine 229 and serine 232. The interval 230-406 is necessary for interaction with CBX2; sequence EDSGDRGGTL…LCYAPTKDPK (177 aa). The span at 235-244 shows a compositional bias: gly residues; the sequence is RGGTLGGGTL. Pro residues predominate over residues 246–258; that stretch reads PPSPPGAPSPPEP. 2 positions are modified to phosphoserine: serine 248 and serine 254. The span at 317 to 343 shows a compositional bias: gly residues; it reads GGPGGGASDTGGPDGGGGERGVSGGGE.

In terms of assembly, component of chromatin-associated Polycomb (PcG) complexes. Part of the E2F6.com-1 complex in G0 phase composed of E2F6, MGA, MAX, TFDP1, CBX3, BAT8, EUHMTASE1, RING1, RNF2/RING2 MBLR, L3MBTL2 and YAF2. Interacts with CBX2 and PCGF6. Component of a PRC1-like complex. Component of repressive BCOR complex containing Polycomb group subcomplex at least composed of RYBP, PCGF1, BCOR and RNF2/RING2. Interacts with BMI1, PHC2, PCGF2, RNF2; CBX6, CBX7 and CBX8. Interacts with MN1. Interacts with USP26.

It localises to the nucleus speckle. The enzyme catalyses S-ubiquitinyl-[E2 ubiquitin-conjugating enzyme]-L-cysteine + [acceptor protein]-L-lysine = [E2 ubiquitin-conjugating enzyme]-L-cysteine + N(6)-ubiquitinyl-[acceptor protein]-L-lysine.. It functions in the pathway protein modification; protein ubiquitination. Constitutes one of the E3 ubiquitin-protein ligases that mediate monoubiquitination of 'Lys-119' of histone H2A, thereby playing a central role in histone code and gene regulation. H2A 'Lys-119' ubiquitination gives a specific tag for epigenetic transcriptional repression and participates in X chromosome inactivation of female mammals. Essential component of a Polycomb group (PcG) multiprotein PRC1-like complex, a complex class required to maintain the transcriptionally repressive state of many genes, including Hox genes, throughout development. PcG PRC1 complex acts via chromatin remodeling and modification of histones, rendering chromatin heritably changed in its expressibility. Compared to RNF2/RING2, it does not have the main E3 ubiquitin ligase activity on histone H2A, and it may rather act as a modulator of RNF2/RING2 activity. In Rattus norvegicus (Rat), this protein is E3 ubiquitin-protein ligase RING1.